The primary structure comprises 506 residues: ATP synthase subunit alpha, chloroplastic (506 aa).

170-177 (GDRQTGKT) is an ATP binding site.

The protein belongs to the ATPase alpha/beta chains family. In terms of assembly, F-type ATPases have 2 components, CF(1) - the catalytic core - and CF(0) - the membrane proton channel. CF(1) has five subunits: alpha(3), beta(3), gamma(1), delta(1), epsilon(1). CF(0) has four main subunits: a, b, b' and c.

The protein resides in the plastid. It is found in the chloroplast thylakoid membrane. The catalysed reaction is ATP + H2O + 4 H(+)(in) = ADP + phosphate + 5 H(+)(out). Produces ATP from ADP in the presence of a proton gradient across the membrane. The alpha chain is a regulatory subunit. The protein is ATP synthase subunit alpha, chloroplastic of Euglena gracilis.